We begin with the raw amino-acid sequence, 176 residues long: Prepronociceptin (176 aa).

Positions 1–19 (MKILFCDLLLLSLFSSVSS) are cleaved as a signal peptide. 2 propeptides span residues 20–95 (SCQK…MQHL) and 169–176 (TLHQNGNA).

The protein belongs to the opioid neuropeptide precursor family. Specific enzymatic cleavages at paired basic residues probably yield other active peptides besides nociceptin. Post-translationally, the N-terminal domain contains 6 conserved cysteines thought to be involved in disulfide bonding and/or processing.

Its subcellular location is the secreted. In terms of biological role, ligand of the opioid receptor-like receptor OPRL1. It may act as a transmitter in the brain by modulating nociceptive and locomotor behavior. May be involved in neuronal differentiation and development. Its function is as follows. Blocks nociceptin action in pain transmission by inhibiting nociceptin-induced hyperalgesia and allodynia. Has potent analgesic activity. This Bos taurus (Bovine) protein is Prepronociceptin (PNOC).